Reading from the N-terminus, the 209-residue chain is ATP-dependent Clp protease proteolytic subunit (209 aa).

Ser101 (nucleophile) is an active-site residue. His126 is a catalytic residue.

The protein belongs to the peptidase S14 family. As to quaternary structure, component of the chloroplastic Clp protease core complex.

Its subcellular location is the plastid. The protein localises to the chloroplast stroma. The catalysed reaction is Hydrolysis of proteins to small peptides in the presence of ATP and magnesium. alpha-casein is the usual test substrate. In the absence of ATP, only oligopeptides shorter than five residues are hydrolyzed (such as succinyl-Leu-Tyr-|-NHMec, and Leu-Tyr-Leu-|-Tyr-Trp, in which cleavage of the -Tyr-|-Leu- and -Tyr-|-Trp bonds also occurs).. Functionally, cleaves peptides in various proteins in a process that requires ATP hydrolysis. Has a chymotrypsin-like activity. Plays a major role in the degradation of misfolded proteins. This chain is ATP-dependent Clp protease proteolytic subunit, found in Huperzia lucidula (Shining clubmoss).